Consider the following 262-residue polypeptide: Light-harvesting complex-like protein 3 isotype 1, chloroplastic (262 aa).

A chloroplast-targeting transit peptide spans 1–39; sequence MALFSPPISSSSLQNPNFIPKFSFSLLSSNRFSLLSVTR. The next 2 membrane-spanning stretches (helical) occupy residues 180–200 and 202–222; these read AAMIGFFMAYFVDSLTGVGLV and QMGNFFCKTLLFVAVAGVLFI.

In terms of assembly, interacts with GGR. Forms homodimer, and heterodimer with LIL3.2. In terms of tissue distribution, expressed in photosynthetically active tissues (at protein level).

The protein localises to the plastid. It localises to the chloroplast thylakoid membrane. Its function is as follows. Light-harvesting-like protein required for biosynthesis of phytylated chlorophylls and alpha-tocopherol in green seedlings. Functions by anchoring geranylgeranyl reductase (GGR) in the thylakoid membrane, leading to the stabilization of GGR activity. Binds chlorophyll a in the thylakoid membrane. Plays a role in the regulation of chlorophyll biosynthesis under light stress and under standard growth conditions. The protein is Light-harvesting complex-like protein 3 isotype 1, chloroplastic (LIL3.1) of Arabidopsis thaliana (Mouse-ear cress).